The following is a 615-amino-acid chain: MQLVPTDDPDEKIGRTSNGMQNATLPIDGPVNTEPKDPAREQWSGKLDFLLSVVGFAVDLGNIWRFPYLCFKNGGGVFLIPYSIMVLLTGVPLFYMELCLGQYYRKGAITTWGRICPLFKGIGYCVILTAFYVDFFYNVILAWGLHYLYTSFSFNLPWASCNNSYNSPACYEPHWSEDGTAMCRSANQSVSAEKISAAEEYFYKGFLGLHEANAPNSHVIRSVTDLGNVRWDIALSLFVVYLICYFSMWKGIHTSGKVVWFTALFPYVVLGILFIRGVTLPGWQNGIEYYLRPNFEMLKRPSVWQDAATQVFFSLGPGFGVLMAYSSYNDFHNNVYVDALFTSFINCATSFLSGFVIFSVLGYMSCKSGKPIEAVAQEGPGLVFVVYPEALSTMPYAPFWSVLFFLMLMTLGLDSSFGGSEAIITGLSDEFPILKKNREVFVGCLFAFYMVIGIAMCTEGGILIMEWLIIYGTTWGLLIAVFCEAMVIAYIYGLRQFVHDVKEMMGFRPGNYWKFCWSCAAPFILLSMITSNFINYQALTYQDYTYPTAANVIGIIFALSGASFIPLVGIYKFVNARGNTISEKWQRVTMPYRKRPNQTEYIPIPTTQPHSDIML.

The tract at residues 1 to 39 is disordered; sequence MQLVPTDDPDEKIGRTSNGMQNATLPIDGPVNTEPKDPA. The Cytoplasmic portion of the chain corresponds to 1–46; it reads MQLVPTDDPDEKIGRTSNGMQNATLPIDGPVNTEPKDPAREQWSGK. Over residues 15 to 24 the composition is skewed to polar residues; the sequence is RTSNGMQNAT. A helical membrane pass occupies residues 47-72; sequence LDFLLSVVGFAVDLGNIWRFPYLCFK. Gly55, Ala57, Val58, and Asn62 together coordinate Na(+). Residues 73-76 are Extracellular-facing; that stretch reads NGGG. The chain crosses the membrane as a helical span at residues 77–100; that stretch reads VFLIPYSIMVLLTGVPLFYMELCL. The Cytoplasmic portion of the chain corresponds to 101 to 120; the sequence is GQYYRKGAITTWGRICPLFK. A helical transmembrane segment spans residues 121–151; the sequence is GIGYCVILTAFYVDFFYNVILAWGLHYLYTS. The Extracellular portion of the chain corresponds to 152 to 229; the sequence is FSFNLPWASC…IRSVTDLGNV (78 aa). A disulfide bridge connects residues Cys161 and Cys170. Asn162 and Asn187 each carry an N-linked (GlcNAc...) asparagine glycan. Residues 230-250 form a helical membrane-spanning segment; sequence RWDIALSLFVVYLICYFSMWK. Residues 251–253 lie on the Cytoplasmic side of the membrane; it reads GIH. A helical transmembrane segment spans residues 254 to 278; the sequence is TSGKVVWFTALFPYVVLGILFIRGV. Residues 279–302 lie on the Extracellular side of the membrane; that stretch reads TLPGWQNGIEYYLRPNFEMLKRPS. The helical transmembrane segment at 303 to 328 threads the bilayer; it reads VWQDAATQVFFSLGPGFGVLMAYSSY. Ser314 is a Na(+) binding site. The Cytoplasmic portion of the chain corresponds to 329–334; sequence NDFHNN. The helical transmembrane segment at 335–358 threads the bilayer; sequence VYVDALFTSFINCATSFLSGFVIF. Position 346 (Asn346) interacts with Na(+). Residues 359–398 are Extracellular-facing; sequence SVLGYMSCKSGKPIEAVAQEGPGLVFVVYPEALSTMPYAP. The helical transmembrane segment at 399 to 424 threads the bilayer; that stretch reads FWSVLFFLMLMTLGLDSSFGGSEAII. Positions 411, 414, and 415 each coordinate Na(+). Residues 425–439 lie on the Cytoplasmic side of the membrane; the sequence is TGLSDEFPILKKNRE. A helical membrane pass occupies residues 440–460; the sequence is VFVGCLFAFYMVIGIAMCTEG. A topological domain (extracellular) is located at residue Gly461. A helical membrane pass occupies residues 462 to 488; the sequence is ILIMEWLIIYGTTWGLLIAVFCEAMVI. At 489 to 518 the chain is on the cytoplasmic side; it reads AYIYGLRQFVHDVKEMMGFRPGNYWKFCWS. Residues 519 to 541 form a helical membrane-spanning segment; that stretch reads CAAPFILLSMITSNFINYQALTY. Over 542–544 the chain is Extracellular; sequence QDY. Residues 545-565 traverse the membrane as a helical segment; sequence TYPTAANVIGIIFALSGASFI. Residues 566–615 lie on the Cytoplasmic side of the membrane; the sequence is PLVGIYKFVNARGNTISEKWQRVTMPYRKRPNQTEYIPIPTTQPHSDIML.

Belongs to the sodium:neurotransmitter symporter (SNF) (TC 2.A.22) family.

It is found in the cell membrane. Functionally, dopamine transporter. Terminates the action of dopamine by its high affinity sodium-dependent reuptake into presynaptic terminals. Plays a role in the learned avoidance behavior of animals exposed to food that induces mitochondrial stress. This chain is Sodium-dependent dopamine transporter, found in Caenorhabditis elegans.